A 1073-amino-acid polypeptide reads, in one-letter code: TSC22 domain family protein 1 (1073 aa).

Residues 1-98 (MHQPPESTAA…SQAQLQAQPL (98 aa)) form a required for interaction with TGFBR1 and promotion of TGF-beta signaling region. Disordered stretches follow at residues 22-110 (MAHP…KKSG), 125-205 (ISSN…PHLP), 220-288 (LHHH…SPAS), 458-486 (VTSE…SVGS), 607-628 (YSQA…QQLQ), and 742-766 (VQQP…QVVP). Residues 36 to 45 (GSASALNAAG) are compositionally biased toward low complexity. Residues 58–70 (FPPPSLLQPPPPA) are compositionally biased toward pro residues. The span at 84-100 (SLNLLSQAQLQAQPLAP) shows a compositional bias: low complexity. A compositionally biased stretch (acidic residues) spans 133–142 (EDTESYDDLD). Positions 220–240 (LHHHHQIHHGHHLQHGHHHPS) are enriched in basic residues. Over residues 257–271 (PVSRKLSTTGSSDSI) the composition is skewed to polar residues. Residue Ser263 is modified to Phosphoserine. Low complexity-rich tracts occupy residues 272-288 (TPVA…SPAS) and 465-483 (TSGS…YTES). The segment covering 614-625 (VQTPLPGAPPPQ) has biased composition (pro residues). Residues 742-764 (VQQPSTQVPPSVIQQGAPPSSQV) show a composition bias toward polar residues. The segment at 1006–1027 (LKEQIKELIEKNSQLEQENNLL) is leucine-zipper. The interval 1037–1073 (AQFQAQLQTGSPPATTQPQGTTQPPAQPASQGSGPTA) is disordered. The segment covering 1044–1073 (QTGSPPATTQPQGTTQPPAQPASQGSGPTA) has biased composition (low complexity).

The protein belongs to the TSC-22/Dip/Bun family. In terms of assembly, forms homodimers. Forms heterodimers. Component of a complex composed of TSC22D1 (via N-terminus), TGFBR1 and TGFBR2; the interaction between TSC22D1 and TGFBR1 is inhibited by SMAD7 and promoted by TGFB1. Interacts with SMAD7; the interaction requires TGF-beta and the interaction is inhibited by TGFBR1. Interacts with TPT1/fortilin; interaction results in the destabilization of TSC22D1 protein and prevents TSC22D1-mediated apoptosis. Interacts with SMAD4 (via N-terminus). Interacts with ACVRL1/ALK1, ACVR1/ALK2, BMPR1A/ALK3, ACVR1B/ALK4, BMPR1B/ALK6, ACVR2A/ACTRII, and BMPR2. Interacts with SMAD6. Interacts with TFE3; the interaction is enhanced in the presence of TGF-beta. Forms a heterodimer with TSC22D4/THG1. As to quaternary structure, forms a heterodimer with TSC22D4/THG1. Interacts with histone H1-2. Interacts with GNL3. In terms of assembly, interacts with histone H1-2. Ubiquitously expressed in adult tissues. Expressed in the postmitotic epithelial compartment at the top of intestinal mucosal villi.

It is found in the cytoplasm. Its subcellular location is the nucleus. The protein resides in the cell membrane. It localises to the mitochondrion. Transcriptional repressor. Acts on the C-type natriuretic peptide (CNP) promoter. Acts to promote CASP3-mediated apoptosis. Positively regulates TGF-beta signaling by interacting with SMAD7 which inhibits binding of SMAD7 to TGFBR1, preventing recruitment of SMURF ubiquitin ligases to TGFBR1 and inhibiting SMURF-mediated ubiquitination and degradation of TGFBR1. Contributes to enhancement of TGF-beta signaling by binding to and modulating the transcription activator activity of SMAD4. Promotes TGF-beta-induced transcription of COL1A2; via its interaction with TFE3 at E-boxes in the gene proximal promoter. Plays a role in the repression of hematopoietic precursor cell growth. Promotes IL2 deprivation-induced apoptosis in T-lymphocytes, via repression of TSC22D3/GILZ transcription and activation of the caspase cascade. Its function is as follows. May act to negatively regulate TGFB3 signaling and thereby inhibit cell death in mammary gland cells. Functionally, positively regulates cell death in response to TGFB3 during mammary gland involution. This chain is TSC22 domain family protein 1, found in Homo sapiens (Human).